The following is a 192-amino-acid chain: Ribosome maturation factor RimP (192 aa).

This sequence belongs to the RimP family.

The protein resides in the cytoplasm. Required for maturation of 30S ribosomal subunits. In Delftia acidovorans (strain DSM 14801 / SPH-1), this protein is Ribosome maturation factor RimP.